The sequence spans 380 residues: Ceramide synthase 2 (380 aa).

At 1-40 the chain is on the lumenal side; that stretch reads MLQTLYDYFWWERLWLPVNLTWADLEDKDGRVYAKASDLY. N-linked (GlcNAc...) asparagine glycosylation is present at Asn-19. A helical transmembrane segment spans residues 41-61; sequence ITLPLALLFLVIRYFFELYVA. Positions 67-128 are homeobox-like; it reads LLNVKEKTRL…RRRRNQDRPS (62 aa). The TLC domain maps to 131–332; that stretch reads KKFREASWRF…ILRMAHKFIT (202 aa). The next 4 helical transmembrane spans lie at 140 to 160, 175 to 195, 209 to 229, and 264 to 284; these read FTYY…KPWF, IIPS…SLLF, QIIH…ANYV, and LFIV…PFWI. A Last loop motif motif is present at residues 291–300; it reads YPLELYPAFF. Residues 304–324 form a helical membrane-spanning segment; that stretch reads FFNFMMAVLQMLHIFWAYFIL. The Cytoplasmic segment spans residues 325–380; that stretch reads RMAHKFITGKLIEDERSDREETESSEGEETAAGAGAKSRLLANGHPILNNNHPKND. Residues 340–380 are disordered; the sequence is RSDREETESSEGEETAAGAGAKSRLLANGHPILNNNHPKND. Ser-341 is modified (phosphoserine). Residues 344–353 show a composition bias toward acidic residues; sequence EETESSEGEE. At Thr-346 the chain carries Phosphothreonine. 2 positions are modified to phosphoserine: Ser-348 and Ser-349.

As to quaternary structure, interacts with ATP6V0C, ASGR1, ASGR2 and SLC22A1/OCT1. Interacts with ELOV1, HSD17B12 and TECR. Interacts with NDUFS2. Interacts with PAQR4; the interaction regulates the stability and activity of CERS2 and is inhibited in presence of ceramides. Post-translationally, acetylated. Deacetylation by SIRT3 increases enzyme activity and promotes mitochondrial ceramide accumulation. Phosphorylated at the C-terminus by CK2, leading to increase the ceramide synthase activity. In terms of tissue distribution, broadly expressed, with highest levels in liver and kidney. In brain is detected in neurons, oligodentrocytes, ependymal cells and epithelial cells of the choroid plexus. In kidney is detected in collecting ducts and to a lesser degree in proximal tubules.

It localises to the endoplasmic reticulum membrane. The catalysed reaction is a very long-chain fatty acyl-CoA + a sphingoid base = an N-(very-long-chain fatty acyl)-sphingoid base + CoA + H(+). It catalyses the reaction docosanoyl-CoA + sphinganine = N-docosanoylsphinganine + CoA + H(+). The enzyme catalyses tetracosanoyl-CoA + sphinganine = N-tetracosanoylsphinganine + CoA + H(+). It carries out the reaction hexacosanoyl-CoA + sphinganine = N-hexacosanoylsphinganine + CoA + H(+). The catalysed reaction is (15Z)-tetracosenoyl-CoA + sphinganine = N-(15Z-tetracosenoyl)-sphinganine + CoA + H(+). It catalyses the reaction 2-hydroxytetracosanoyl-CoA + sphinganine = N-(2-hydroxytetracosanoyl)-sphinganine + CoA + H(+). The enzyme catalyses 2-hydroxydocosanoyl-CoA + sphinganine = N-(2-hydroxydocosanoyl)-sphinganine + CoA + H(+). It carries out the reaction 2-hydroxytetracosenoyl-CoA + sphinganine = N-(2-hydroxytetracosenoyl)-sphinganine + CoA + H(+). The catalysed reaction is tetracosenoyl-CoA + sphinganine = an N-tetracosenoylsphinganine + CoA + H(+). It catalyses the reaction hexacosenoyl-CoA + sphinganine = N-hexacosenoylsphinganine + CoA + H(+). The enzyme catalyses tetracosanoyl-CoA + sphing-4-enine = N-tetracosanoyl-sphing-4-enine + CoA + H(+). It carries out the reaction tetracosenoyl-CoA + sphing-4-enine = N-(tetracosenoyl)-sphing-4-enine + CoA + H(+). The catalysed reaction is heptadecasphing-4-enine + tetracosanoyl-CoA = N-tetracosanoyl-heptadecasphing-4-enine + CoA + H(+). It catalyses the reaction a fatty acyl-CoA + sphing-4-enine = an N-acylsphing-4-enine + CoA + H(+). The enzyme catalyses sphing-4-enine + hexadecanoyl-CoA = N-hexadecanoylsphing-4-enine + CoA + H(+). It carries out the reaction sphing-4-enine + octadecanoyl-CoA = N-octadecanoylsphing-4-enine + CoA + H(+). The catalysed reaction is eicosanoyl-CoA + sphing-4-enine = N-eicosanoyl-sphing-4-enine + CoA + H(+). It catalyses the reaction sphinganine + hexadecanoyl-CoA = N-hexadecanoylsphinganine + CoA + H(+). The enzyme catalyses sphinganine + octadecanoyl-CoA = N-(octadecanoyl)-sphinganine + CoA + H(+). It carries out the reaction sphinganine + (9Z)-octadecenoyl-CoA = N-(9Z-octadecenoyl)-sphinganine + CoA + H(+). The catalysed reaction is eicosanoyl-CoA + sphinganine = N-eicosanoylsphinganine + CoA + H(+). The protein operates within lipid metabolism; sphingolipid metabolism. With respect to regulation, ceramide synthase activity is inhibited by sphingosine-1-phosphate. Functionally, ceramide synthase that catalyzes the transfer of the acyl chain from acyl-CoA to a sphingoid base, with high selectivity toward very-long-chain fatty acyl-CoA (chain length C22-C27). N-acylates sphinganine and sphingosine bases to form dihydroceramides and ceramides in de novo synthesis and salvage pathways, respectively. Plays a non-redundant role in the synthesis of ceramides with very-long-chain fatty acids in kidney, liver and brain. Regulates the abundance of myelin-specific sphingolipids galactosylceramide and sulfatide that affects myelin sheath architecture and motor neuron functions. This is Ceramide synthase 2 from Mus musculus (Mouse).